Reading from the N-terminus, the 298-residue chain is Glutamyl-Q tRNA(Asp) synthetase (298 aa).

Residues 9-13 (RFAPS) and Glu45 contribute to the L-glutamate site. The short motif at 12 to 22 (PSPTGLLHAGS) is the 'HIGH' region element. Residues Cys101, Cys103, Tyr121, and Cys125 each contribute to the Zn(2+) site. The L-glutamate site is built by Tyr179 and Arg197. The 'KMSKS' region signature appears at 235-239 (KLSKQ). Lys238 provides a ligand contact to ATP.

It belongs to the class-I aminoacyl-tRNA synthetase family. GluQ subfamily. It depends on Zn(2+) as a cofactor.

Functionally, catalyzes the tRNA-independent activation of glutamate in presence of ATP and the subsequent transfer of glutamate onto a tRNA(Asp). Glutamate is transferred on the 2-amino-5-(4,5-dihydroxy-2-cyclopenten-1-yl) moiety of the queuosine in the wobble position of the QUC anticodon. The chain is Glutamyl-Q tRNA(Asp) synthetase from Chromobacterium violaceum (strain ATCC 12472 / DSM 30191 / JCM 1249 / CCUG 213 / NBRC 12614 / NCIMB 9131 / NCTC 9757 / MK).